The following is a 99-amino-acid chain: Cytochrome c2 iso-1 (99 aa).

Heme c is bound by residues cysteine 10, cysteine 13, histidine 14, and methionine 75.

The protein belongs to the cytochrome c family. In terms of processing, binds 1 heme c group covalently per subunit.

In terms of biological role, cytochrome c2 is found mainly in purple, non-sulfur, photosynthetic bacteria where it functions as the electron donor to the oxidized bacteriochlorophyll in the photophosphorylation pathway. However, it may also have a role in the respiratory chain and is found in some non-photosynthetic bacteria. The chain is Cytochrome c2 iso-1 from Magnetospirillum fulvum (Rhodospirillum fulvum).